We begin with the raw amino-acid sequence, 207 residues long: Large ribosomal subunit protein uL4 (207 aa).

Belongs to the universal ribosomal protein uL4 family. In terms of assembly, part of the 50S ribosomal subunit.

Functionally, one of the primary rRNA binding proteins, this protein initially binds near the 5'-end of the 23S rRNA. It is important during the early stages of 50S assembly. It makes multiple contacts with different domains of the 23S rRNA in the assembled 50S subunit and ribosome. In terms of biological role, forms part of the polypeptide exit tunnel. In Rickettsia conorii (strain ATCC VR-613 / Malish 7), this protein is Large ribosomal subunit protein uL4.